Here is a 215-residue protein sequence, read N- to C-terminus: S-crystallin 2 (215 aa).

The 79-residue stretch at 2-80 (PSYTLNYFNH…YLAREFGFHG (79 aa)) folds into the GST N-terminal domain. A GST C-terminal domain is found at 82 to 215 (NNMEMARVEY…YLKKRSSTEF (134 aa)).

The protein belongs to the GST superfamily. In terms of tissue distribution, lens.

Functionally, S-crystallins are structural components of squids and octopi eye lens. Contains relatively little if any GST activity. The protein is S-crystallin 2 of Enteroctopus dofleini (North Pacific giant octopus).